Consider the following 481-residue polypeptide: 7-deoxyloganetin glucosyltransferase (481 aa).

Catalysis depends on His-22, which acts as the Proton acceptor. His-22 is a binding site for an anthocyanidin. Catalysis depends on Asp-126, which acts as the Charge relay. Residues Thr-148, Gln-363, His-378, Trp-381, Asn-382, Ser-383, and Glu-386 each coordinate UDP-alpha-D-glucose. Position 401 (Ala-401) interacts with an anthocyanidin. UDP-alpha-D-glucose is bound by residues Glu-402 and Gln-403.

Belongs to the UDP-glycosyltransferase family. As to expression, ubiquitous. Very low expression in stems.

It catalyses the reaction 7-deoxyloganetin + UDP-alpha-D-glucose = 7-deoxyloganin + UDP + H(+). Its function is as follows. Iridoid glucosyltransferase acting on genipin and 7-deoxyloganetin. No activity with 7-deoxyloganetic acid. Involved in geniposide biosynthesis. The chain is 7-deoxyloganetin glucosyltransferase (UGT85A24) from Gardenia jasminoides (Cape jasmine).